The following is a 121-amino-acid chain: MPRVKRGVTARARHKKITDAATGYRGRRKNVFRIAKQAVMRAGQYAYRDRRNKKRVFRALWIARINAAVRQHDVTYSVFMNGMKKVAIELDRKVLSDMAIADKAAFAALVTRIKSVVNAAA.

Belongs to the bacterial ribosomal protein bL20 family.

Binds directly to 23S ribosomal RNA and is necessary for the in vitro assembly process of the 50S ribosomal subunit. It is not involved in the protein synthesizing functions of that subunit. In Polynucleobacter necessarius subsp. necessarius (strain STIR1), this protein is Large ribosomal subunit protein bL20.